The following is a 333-amino-acid chain: Protein APEM9 (333 aa).

The Cytoplasmic segment spans residues 1 to 90 (MEATDIWGEI…ELRDVFGEVA (90 aa)). A helical transmembrane segment spans residues 91–102 (AIPVQVLLTGVC). Residues 103-268 (LQISNGSYLG…KVGNTQFSMS (166 aa)) lie on the Peroxisomal side of the membrane. The helical transmembrane segment at 269–285 (RGKVAVSLVGLIICYAL) threads the bilayer. Over 286–333 (KRKRAALIRIIRRQMESTRKAIVDFWKLAFSYQVNPLAAIQSIPSTTT) the chain is Cytoplasmic.

In terms of assembly, interacts with PEX6 and PEX19-1, but not with PEX1. Interacts (via N-terminus) with PEX13, and (via N-terminus and C-terminus) with PEX16. Expressed in roots, leaves, stems, flowers, buds and fruits.

The protein resides in the peroxisome membrane. Its function is as follows. Involved in peroxisome biogenesis and matrix protein import. Required for pollen maturation and in vivo germination via its role in peroxisomal function, which partially involves jasmonic acid biosynthesis. Transported to peroxisomes via the interaction with PEX19-1. Required for peroxisomal protein import by acting as an anchoring protein for the AAA ATPase complex, which consists of PEX1 and PEX6. This is Protein APEM9 from Arabidopsis thaliana (Mouse-ear cress).